Here is a 181-residue protein sequence, read N- to C-terminus: Cell division protein ZapC (181 aa).

It belongs to the ZapC family. Interacts directly with FtsZ.

The protein localises to the cytoplasm. Functionally, contributes to the efficiency of the cell division process by stabilizing the polymeric form of the cell division protein FtsZ. Acts by promoting interactions between FtsZ protofilaments and suppressing the GTPase activity of FtsZ. In Shewanella woodyi (strain ATCC 51908 / MS32), this protein is Cell division protein ZapC.